The chain runs to 252 residues: MKVLNLGSKKQASFYVACELYKEMAFNQHCKLGLATGGTMTDLYEQLVKLLNKNQLNVDNVSTFNLDEYVGLTASHPQSYHYYMDAMLFKQYPYFNRKNIHIPNGDADDMNAEASKYNDVLEQQGQRDIQILGIGENGHIGFNEPGTPFDSVTHIVDLTESTIKANSRYFENEDDVPKQAISMGLANILQAKRIILLAFGEKKRAAITHLLNQEISVDVPATLLHKHPNVEIYLDDEACPKNVAKIHVDEMD.

Asp-67 acts as the Proton acceptor; for enolization step in catalysis. Asn-137 (for ring-opening step) is an active-site residue. Residue His-139 is the Proton acceptor; for ring-opening step of the active site. The active-site For ring-opening step is Glu-144.

Belongs to the glucosamine/galactosamine-6-phosphate isomerase family. NagB subfamily.

It carries out the reaction alpha-D-glucosamine 6-phosphate + H2O = beta-D-fructose 6-phosphate + NH4(+). Its pathway is amino-sugar metabolism; N-acetylneuraminate degradation; D-fructose 6-phosphate from N-acetylneuraminate: step 5/5. Catalyzes the reversible isomerization-deamination of glucosamine 6-phosphate (GlcN6P) to form fructose 6-phosphate (Fru6P) and ammonium ion. This chain is Glucosamine-6-phosphate deaminase, found in Staphylococcus aureus (strain bovine RF122 / ET3-1).